The following is a 327-amino-acid chain: Biotin synthase (327 aa).

A Radical SAM core domain is found at 52 to 279 (NAIQRSTLLS…TSWVRLSAGR (228 aa)). Residues C67, C71, and C74 each contribute to the [4Fe-4S] cluster site. [2Fe-2S] cluster-binding residues include C111, C142, C202, and R274.

The protein belongs to the radical SAM superfamily. Biotin synthase family. In terms of assembly, homodimer. [4Fe-4S] cluster is required as a cofactor. It depends on [2Fe-2S] cluster as a cofactor.

It carries out the reaction (4R,5S)-dethiobiotin + (sulfur carrier)-SH + 2 reduced [2Fe-2S]-[ferredoxin] + 2 S-adenosyl-L-methionine = (sulfur carrier)-H + biotin + 2 5'-deoxyadenosine + 2 L-methionine + 2 oxidized [2Fe-2S]-[ferredoxin]. Its pathway is cofactor biosynthesis; biotin biosynthesis; biotin from 7,8-diaminononanoate: step 2/2. Catalyzes the conversion of dethiobiotin (DTB) to biotin by the insertion of a sulfur atom into dethiobiotin via a radical-based mechanism. In Dechloromonas aromatica (strain RCB), this protein is Biotin synthase.